The sequence spans 289 residues: GTPase Era (289 aa).

Positions 2-167 (KSGFISLIGR…LDEIYKYLPE (166 aa)) constitute an Era-type G domain. A G1 region spans residues 10–17 (GRTNAGKS). 10–17 (GRTNAGKS) provides a ligand contact to GTP. The G2 stretch occupies residues 36–40 (NATRR). Positions 57 to 60 (DTPG) are G3. GTP contacts are provided by residues 57 to 61 (DTPGL) and 116 to 119 (TKID). The segment at 116–119 (TKID) is G4. Residues 146–148 (LSV) are G5. Residues 198–274 (VSDEVPYSTD…FLKINVKIDK (77 aa)) enclose the KH type-2 domain.

This sequence belongs to the TRAFAC class TrmE-Era-EngA-EngB-Septin-like GTPase superfamily. Era GTPase family. As to quaternary structure, monomer.

The protein localises to the cytoplasm. It localises to the cell inner membrane. In terms of biological role, an essential GTPase that binds both GDP and GTP, with rapid nucleotide exchange. Plays a role in 16S rRNA processing and 30S ribosomal subunit biogenesis and possibly also in cell cycle regulation and energy metabolism. The protein is GTPase Era of Campylobacter fetus subsp. fetus (strain 82-40).